Consider the following 767-residue polypeptide: MVQSAVLGFPRIGPNRELKKATEGYWNGKITVDELFKVGKDLRTQNWKLQKEAGVDIIPSNDFSFYDQVLDLSLLFNVIPDRYTKYDLSPIDTLFAMGRGLQRKATETEKAVDVTALEMVKWFDSNYHYVRPTFSKTTQFKLNGQKPVDEFLEAKELGIHTRPVLLGPVSYLFLGKADKDSLDLEPLSLLEQLLPLYTEILSKLASAGATEVQIDEPVLVLDLPANAQAAIKKAYTYFGEQSNLPKITLATYFGTVVPNLDAIKGLPVAALHVDFVRAPEQFDEVVAAIGNKQTLSVGIVDGRNIWKNDFKKSSAIVNKAIEKLGADRVVVATSSSLLHTPVDLNNETKLDAEIKGFFSFATQKLDEVVVITKNVSGQDVAAALEANAKSVESRGKSKFIHDAAVKARVASIDEKMSTRAAPFEQRLPEQQKVFNLPLFPTTTIGSFPQTKDIRINRNKFNKGTISAEEYEKFINSEIEKVIRFQEEIGLDVLVHGEPERNDMVQYFGEQINGYAFTVNGWVQSYGSRYVRPPIIVGDLSRPKAMSVKESVYAQSITSKPVKGMLTGPITCLRWSFPRDDVDQKTQAMQLALALRDEVNDLEAAGIKVIQVDEPALREGLPLREGTERSAYYTWAAEAFRVATSGVANKTQIHSHFCYSDLDPNHIKALDADVVSIEFSKKDDANYIAEFKNYPNHIGLGLFDIHSPRIPSKDEFIAKISTILKSYPAEKFWVNPDCGLKTRGWEETRLSLTHMVEAAKYFREQYKN.

Lys19 contacts 5-methyltetrahydropteroyltri-L-glutamate. Position 89 is a phosphoserine (Ser89). Asn126 serves as a coordination point for 5-methyltetrahydropteroyltri-L-glutamate. A Phosphoserine modification is found at Ser242. L-homocysteine is bound by residues Ile444–Ser446 and Glu497. L-methionine is bound by residues Ile444–Ser446 and Glu497. 5-methyltetrahydropteroyltri-L-glutamate-binding positions include Asp502, Tyr525, and Arg528–Tyr529. At Thr566 the chain carries Phosphothreonine. Trp574 contributes to the 5-methyltetrahydropteroyltri-L-glutamate binding site. Residue Asp612 coordinates L-homocysteine. Residue Asp612 participates in L-methionine binding. Phosphoserine is present on Ser629. Positions 655, 657, and 677 each coordinate Zn(2+). The active-site Proton donor is His705. Residue Ser706 is modified to Phosphoserine. Cys737 contacts Zn(2+).

Belongs to the vitamin-B12 independent methionine synthase family. It depends on Zn(2+) as a cofactor.

It carries out the reaction 5-methyltetrahydropteroyltri-L-glutamate + L-homocysteine = tetrahydropteroyltri-L-glutamate + L-methionine. Its pathway is amino-acid biosynthesis; L-methionine biosynthesis via de novo pathway; L-methionine from L-homocysteine (MetE route): step 1/1. Catalyzes the transfer of a methyl group from 5-methyltetrahydrofolate to homocysteine resulting in methionine formation. The polypeptide is 5-methyltetrahydropteroyltriglutamate--homocysteine methyltransferase (MET6) (Saccharomyces cerevisiae (strain ATCC 204508 / S288c) (Baker's yeast)).